A 649-amino-acid chain; its full sequence is Acetyl-coenzyme A synthetase (649 aa).

CoA-binding positions include 191–194 (RGGR), Thr-309, and Asn-333. Residues 385-387 (GEP), 409-414 (DTWWQT), Asp-498, and Arg-513 each bind ATP. CoA is bound at residue Ser-521. Position 524 (Arg-524) interacts with ATP. Mg(2+) is bound by residues Val-535, His-537, and Val-540. Arg-582 contributes to the CoA binding site. Lys-607 carries the post-translational modification N6-acetyllysine.

This sequence belongs to the ATP-dependent AMP-binding enzyme family. Requires Mg(2+) as cofactor. Acetylated. Deacetylation by the SIR2-homolog deacetylase activates the enzyme.

It catalyses the reaction acetate + ATP + CoA = acetyl-CoA + AMP + diphosphate. Functionally, catalyzes the conversion of acetate into acetyl-CoA (AcCoA), an essential intermediate at the junction of anabolic and catabolic pathways. AcsA undergoes a two-step reaction. In the first half reaction, AcsA combines acetate with ATP to form acetyl-adenylate (AcAMP) intermediate. In the second half reaction, it can then transfer the acetyl group from AcAMP to the sulfhydryl group of CoA, forming the product AcCoA. This is Acetyl-coenzyme A synthetase from Novosphingobium aromaticivorans (strain ATCC 700278 / DSM 12444 / CCUG 56034 / CIP 105152 / NBRC 16084 / F199).